Reading from the N-terminus, the 103-residue chain is Cystatin-A1 (103 aa).

The short motif at 51–55 is the Secondary area of contact element; the sequence is QVVAG.

The protein belongs to the cystatin family.

It localises to the cytoplasm. This is an intracellular thiol proteinase inhibitor. The protein is Cystatin-A1 of Sus scrofa (Pig).